The primary structure comprises 505 residues: MFFSKDLPSPTSVFTAYASMAGYMMMIRSMAHELIPAPLQDFIYRTLRSLFFRSSSSTLTLTIDDDNMGMNNEIYRAAQTYLSTKISPDAVRLRISKGHKDKHVNLYLSDGEIVNDVYEDVQLVWRFVTDGGDKKGGGGGVGGRGGGGGRRGGMDDDGKSEYFELSFDKKHKDLILNSYVPYIESKAKEIRDERRILMLHSLNSLRWESVILEHPSTFETMAMEDDLKRDVIEDLDRFIRRKEFYKRVGKAWKRGYLLYGPPGTGKSSLVAAMANYLKFDVYDLQLASVMRDSDLRRLLLATRNRSILVIEDIDCAVDLPNRIEQPVEGKNRGESQGPLTLSGLLNFIDGLWSSCGDERIIIFTTNHKDRLDPALLRPGRMDMHIYMGHCSFQGFKTLASNYLGLSDAAMPHRLFPEIERLIDGEVMTPAQVAEELMKSEDADVALEGLVNVLEKMRLKSKESNPVMMKQKESRLEMEEMRLKSDTEGSPRKNSKRFKKLVLFWT.

A helical transmembrane segment spans residues 11-27 (TSVFTAYASMAGYMMMI). Positions 136 to 155 (GGGGGVGGRGGGGGRRGGMD) are disordered. Residues 137–151 (GGGGVGGRGGGGGRR) show a composition bias toward gly residues. 260-267 (GPPGTGKS) contacts ATP.

Belongs to the AAA ATPase family. BCS1 subfamily. The cofactor is Mg(2+).

It is found in the membrane. The enzyme catalyses ATP + H2O = ADP + phosphate + H(+). The protein is AAA-ATPase At5g17760 of Arabidopsis thaliana (Mouse-ear cress).